Reading from the N-terminus, the 175-residue chain is tRNA-acetylating toxin 3 (175 aa).

Acetyl-CoA contacts are provided by L95, V97, G103, G105, G107, A108, D133, Q138, D141, and W142. The active site involves Y143. 2 residues coordinate acetyl-CoA: G145 and F146.

It belongs to the acetyltransferase family. GNAT subfamily. Homodimer (in absence of antitoxin); has a condensed and elongated form. Forms a complex with cognate antitoxin TacA3. Forms a 4:2 antitoxin:toxin complex with cognate antitoxin TacA3. Forms a 4:4 antitoxin:toxin complex with promoter DNA, where 2 TacT3 dimers bridge 2 TacA3 dimers. Only TacA3 contacts promoter DNA in the octomeric form. TacT3 may contact DNA in the hexameric form.

The catalysed reaction is glycyl-tRNA(Gly) + acetyl-CoA = N-acetylglycyl-tRNA(Gly) + CoA + H(+). Its function is as follows. Toxic component of a type II toxin-antitoxin (TA) system. Acetylates tRNA and inhibits translation. Acetylates only Gly-tRNA on all 3 Gly-tRNA(Gly) isoacceptors in situ. In vitro acetylates mainly Ile/Leu and Gly. Overexpression during the lag phase of a tacA3-tacT3 deletion strain leads to a 150-fold increase in persister cells in the presence of cefotaxime and a non-growth state in the absence of antibiotic. Persister cell formation and the growth defect are neutralized by cognate antitoxin TacA3, but not by TacA1 or TacA2. Plays a role in persister cell formation. Functionally, the TacA3-TacT3 complex both represses and derepresses expression of its own operon. The hexameric 4:2 TacA3-TacT3 complex binds promoter DNA and represses its transcription; both subunits are required. The octomeric 4:4 TacA3-TacT3 complex derepresses the operon. The shift from hexameric to octomeric complex probably alters DNA-binding, leading to dissociation from the operator DNA and derepression. The chain is tRNA-acetylating toxin 3 from Salmonella typhimurium (strain 14028s / SGSC 2262).